The following is an 864-amino-acid chain: Protein 4.1 (864 aa).

2 stretches are compositionally biased toward polar residues: residues 1–16 and 27–41; these read MTTEKSLVTEAENSQH and NSGQQEPQQEESCQT. Disordered stretches follow at residues 1–122, 136–170, and 182–202; these read MTTE…GTSL, EPELKTDPSLDLHSLSSAETQPAQEELREDPDFEI, and IEVKEESPQSKAETELKASQK. At Ser-14 the chain carries Phosphoserine. A Phosphothreonine; by CDK1 modification is found at Thr-60. A compositionally biased stretch (basic and acidic residues) spans 61–75; it reads PTHEDLTKNKERTSE. A compositionally biased stretch (low complexity) spans 76–87; that stretch reads SRGLSRLFSSFL. Ser-84, Ser-85, Ser-95, Ser-104, Ser-121, Ser-149, Ser-151, Ser-152, Ser-188, and Ser-191 each carry phosphoserine. A compositionally biased stretch (basic and acidic residues) spans 101 to 117; that stretch reads EVESDKEKGEGGQKEIE. The span at 149–158 shows a compositional bias: polar residues; it reads SLSSAETQPA. The span at 182–199 shows a compositional bias: basic and acidic residues; the sequence is IEVKEESPQSKAETELKA. An FERM domain is found at 210-491; sequence MHCKVSLLDD…EHHTFFRLTS (282 aa). Tyr-222 bears the Phosphotyrosine mark. Thr-378 bears the Phosphothreonine mark. The tract at residues 494–614 is hydrophilic; sequence TIPKSKFLAL…QAEPEPTEAW (121 aa). Disordered regions lie at residues 518-572 and 586-611; these read RQAS…VAEG and KAQKETVKAEVKKEDEPPEQAEPEPT. Ser-521, Ser-540, Ser-542, and Ser-555 each carry phosphoserine. The span at 587–600 shows a compositional bias: basic and acidic residues; sequence AQKETVKAEVKKED. Acidic residues predominate over residues 601–610; the sequence is EPPEQAEPEP. The segment at 615–713 is spectrin--actin-binding; it reads KVEKTHIEVT…WDKRLSTHSP (99 aa). Tyr-660 is modified (phosphotyrosine; by EGFR). Ser-664, Ser-674, Ser-684, and Ser-709 each carry phosphoserine. Phosphoserine; by CDK1 is present on Ser-712. The C-terminal (CTD) stretch occupies residues 714 to 864; the sequence is FRTLNINGQI…VHQETEIADE (151 aa). Thr-736 and Thr-859 each carry phosphothreonine.

Binds with a high affinity to glycophorin and with lower affinity to band III protein. Associates with the nuclear mitotic apparatus. Interacts with calmodulin. Interacts with CPAP. Interacts with DLG1. Also found to associate with contractile apparatus and tight junctions. Interacts with NUMA1; this interaction is negatively regulated by CDK1 during metaphase and promotes anaphase-specific localization of NUMA1 in symmetrically dividing cells. Interacts with ATP2B1; regulates small intestinal calcium absorption through regulation of membrane expression of ATP2B1. Phosphorylated at multiple sites by different protein kinases and each phosphorylation event selectively modulates the protein's functions. Post-translationally, phosphorylation on Tyr-660 reduces the ability of 4.1 to promote the assembly of the spectrin/actin/4.1 ternary complex. In terms of processing, O-glycosylated; contains N-acetylglucosamine side chains in the C-terminal domain.

It localises to the cytoplasm. The protein localises to the cytoskeleton. Its subcellular location is the cell cortex. The protein resides in the nucleus. Protein 4.1 is a major structural element of the erythrocyte membrane skeleton. It plays a key role in regulating membrane physical properties of mechanical stability and deformability by stabilizing spectrin-actin interaction. Recruits DLG1 to membranes. Required for dynein-dynactin complex and NUMA1 recruitment at the mitotic cell cortex during anaphase. The chain is Protein 4.1 from Homo sapiens (Human).